Here is an 817-residue protein sequence, read N- to C-terminus: Sorting nexin-29 (817 aa).

In terms of domain architecture, RUN spans 37–181 (SDSDSRVTCL…ILFAINIDNK (145 aa)). A phosphoserine mark is found at S269, S292, S293, S331, and S345. The segment at 271–299 (DDEEDEQSSGDVFKKIPGAGESSEENSDR) is disordered. Disordered regions lie at residues 344-381 (KSID…LDAG) and 417-460 (APLG…LPSA). The segment covering 347–358 (DDEDADENEDDV) has biased composition (acidic residues). Basic and acidic residues predominate over residues 369–378 (GHSESPEKPL). Low complexity predominate over residues 445–460 (SPPGQESPLSSLLPSA). A Phosphoserine modification is found at S451. The stretch at 466-546 (MTVSDLRQAI…VLKVQLKKYV (81 aa)) forms a coiled coil. Phosphoserine is present on S641. A Phosphothreonine modification is found at T643. Phosphoserine is present on residues S644 and S648. Positions 658–781 (ALINVWIPSV…PFFVDITPPG (124 aa)) constitute a PX domain. The disordered stretch occupies residues 784 to 817 (LTKNSRPKVASRFPKLARGHPRETRNVEPQSGDL).

Belongs to the sorting nexin family.

The polypeptide is Sorting nexin-29 (SNX29) (Bos taurus (Bovine)).